The primary structure comprises 261 residues: MEKVKAKKHLGQHFLKDESIAKAIADTLSLKGYDEVLEIGPGMGVLTKYLLDKPVNTRVIEIDTESVEYLGVNYPKLKDKIISEDFLKYNINQVYENKQFAIIGNFPYNISSQIVFRTLEFRDQIPEFSGMFQKEVAERICEKKGSKTYGILSVLAQAFYDTEYLFTVSENVFIPPPKVKSGVMKMTRKEDYSLPCGEKLFFTVVKTAFQQRRKTLRNSLKTLNLSDKLREDIIFDKRPEQLSVEEFIVLTQKIEADGVQS.

S-adenosyl-L-methionine contacts are provided by H13, L15, G40, E61, D85, and N105.

It belongs to the class I-like SAM-binding methyltransferase superfamily. rRNA adenine N(6)-methyltransferase family. RsmA subfamily.

It is found in the cytoplasm. The enzyme catalyses adenosine(1518)/adenosine(1519) in 16S rRNA + 4 S-adenosyl-L-methionine = N(6)-dimethyladenosine(1518)/N(6)-dimethyladenosine(1519) in 16S rRNA + 4 S-adenosyl-L-homocysteine + 4 H(+). Functionally, specifically dimethylates two adjacent adenosines (A1518 and A1519) in the loop of a conserved hairpin near the 3'-end of 16S rRNA in the 30S particle. May play a critical role in biogenesis of 30S subunits. The protein is Ribosomal RNA small subunit methyltransferase A of Flavobacterium johnsoniae (strain ATCC 17061 / DSM 2064 / JCM 8514 / BCRC 14874 / CCUG 350202 / NBRC 14942 / NCIMB 11054 / UW101) (Cytophaga johnsonae).